Consider the following 444-residue polypeptide: Glutamate-1-semialdehyde 2,1-aminomutase (444 aa).

An N6-(pyridoxal phosphate)lysine modification is found at Lys-267.

The protein belongs to the class-III pyridoxal-phosphate-dependent aminotransferase family. HemL subfamily. As to quaternary structure, homodimer. Pyridoxal 5'-phosphate serves as cofactor.

Its subcellular location is the cytoplasm. The enzyme catalyses (S)-4-amino-5-oxopentanoate = 5-aminolevulinate. Its pathway is porphyrin-containing compound metabolism; protoporphyrin-IX biosynthesis; 5-aminolevulinate from L-glutamyl-tRNA(Glu): step 2/2. This Xylella fastidiosa (strain Temecula1 / ATCC 700964) protein is Glutamate-1-semialdehyde 2,1-aminomutase.